Reading from the N-terminus, the 282-residue chain is 3-methyl-2-oxobutanoate hydroxymethyltransferase (282 aa).

D46 and D85 together coordinate Mg(2+). Residues 46 to 47 (DS), D85, and K115 each bind 3-methyl-2-oxobutanoate. E117 serves as a coordination point for Mg(2+). E184 serves as the catalytic Proton acceptor.

Belongs to the PanB family. As to quaternary structure, homodecamer; pentamer of dimers. Requires Mg(2+) as cofactor.

The protein localises to the cytoplasm. It carries out the reaction 3-methyl-2-oxobutanoate + (6R)-5,10-methylene-5,6,7,8-tetrahydrofolate + H2O = 2-dehydropantoate + (6S)-5,6,7,8-tetrahydrofolate. The protein operates within cofactor biosynthesis; (R)-pantothenate biosynthesis; (R)-pantoate from 3-methyl-2-oxobutanoate: step 1/2. Functionally, catalyzes the reversible reaction in which hydroxymethyl group from 5,10-methylenetetrahydrofolate is transferred onto alpha-ketoisovalerate to form ketopantoate. The polypeptide is 3-methyl-2-oxobutanoate hydroxymethyltransferase (Alkaliphilus metalliredigens (strain QYMF)).